The sequence spans 320 residues: 2-oxoglutarate-dependent dioxygenase thnC (320 aa).

Residues 174–278 (PLVQMKLIRY…HSCATFWHGD (105 aa)) enclose the Fe2OG dioxygenase domain. H199, D201, and H258 together coordinate Fe cation. R268 contributes to the 2-oxoglutarate binding site.

Belongs to the iron/ascorbate-dependent oxidoreductase family. Fe(2+) is required as a cofactor.

It carries out the reaction trihazone A + 2-oxoglutarate + O2 + H(+) = trihazone D + succinate + 2 CO2 + H2O. It participates in secondary metabolite biosynthesis. In terms of biological role, 2-oxoglutarate-dependent dioxygenase; part of the gene cluster that produces the tetronate natural products trihazones. ThnC catalyzes the oxidative decarboxylation of trihazone A to trihazone D. The C4 hydrogen is first abstracted by the iron-oxo species generated in ThnC to give a tertiary radical at C4. This is followed by decarboxylation and removal of the second electron by the FeIII-OH center to give trihazone D. The pathway begins with the formation of trihazone A by the hybrid PKS-NRPS synthetase thnA and the trans-enoyl reductase thnE. Trihazone A is further decarboxylated by the 2-oxoglutarate-dependent dioxygenase thnC to produce trihazone D. The function of the FAD-dependent monooxygenase thnD has still to be identified. In Trichoderma harzianum (Hypocrea lixii), this protein is 2-oxoglutarate-dependent dioxygenase thnC.